The primary structure comprises 170 residues: Adenine phosphoribosyltransferase (170 aa).

The protein belongs to the purine/pyrimidine phosphoribosyltransferase family. Homodimer.

It is found in the cytoplasm. The enzyme catalyses AMP + diphosphate = 5-phospho-alpha-D-ribose 1-diphosphate + adenine. It participates in purine metabolism; AMP biosynthesis via salvage pathway; AMP from adenine: step 1/1. In terms of biological role, catalyzes a salvage reaction resulting in the formation of AMP, that is energically less costly than de novo synthesis. The polypeptide is Adenine phosphoribosyltransferase (Bacillus anthracis (strain A0248)).